The primary structure comprises 81 residues: Photosystem I iron-sulfur center (81 aa).

4Fe-4S ferredoxin-type domains lie at Ser2 to Trp31 and Gly37 to Tyr68. 8 residues coordinate [4Fe-4S] cluster: Cys11, Cys14, Cys17, Cys21, Cys48, Cys51, Cys54, and Cys58.

The cyanobacterial PSI reaction center is composed of one copy each of PsaA,B,C,D,E,F,I,J,K,L,M and X, and forms trimeric complexes. The cofactor is [4Fe-4S] cluster.

The protein resides in the cellular thylakoid membrane. The enzyme catalyses reduced [plastocyanin] + hnu + oxidized [2Fe-2S]-[ferredoxin] = oxidized [plastocyanin] + reduced [2Fe-2S]-[ferredoxin]. Apoprotein for the two 4Fe-4S centers FA and FB of photosystem I (PSI); essential for photochemical activity. FB is the terminal electron acceptor of PSI, donating electrons to ferredoxin. The C-terminus interacts with PsaA/B/D and helps assemble the protein into the PSI complex. Required for binding of PsaD and PsaE to PSI. PSI is a plastocyanin/cytochrome c6-ferredoxin oxidoreductase, converting photonic excitation into a charge separation, which transfers an electron from the donor P700 chlorophyll pair to the spectroscopically characterized acceptors A0, A1, FX, FA and FB in turn. The polypeptide is Photosystem I iron-sulfur center (Trichodesmium erythraeum (strain IMS101)).